The sequence spans 230 residues: 2-C-methyl-D-erythritol 4-phosphate cytidylyltransferase (230 aa).

The protein belongs to the IspD/TarI cytidylyltransferase family. IspD subfamily.

The catalysed reaction is 2-C-methyl-D-erythritol 4-phosphate + CTP + H(+) = 4-CDP-2-C-methyl-D-erythritol + diphosphate. It participates in isoprenoid biosynthesis; isopentenyl diphosphate biosynthesis via DXP pathway; isopentenyl diphosphate from 1-deoxy-D-xylulose 5-phosphate: step 2/6. In terms of biological role, catalyzes the formation of 4-diphosphocytidyl-2-C-methyl-D-erythritol from CTP and 2-C-methyl-D-erythritol 4-phosphate (MEP). This chain is 2-C-methyl-D-erythritol 4-phosphate cytidylyltransferase, found in Shewanella halifaxensis (strain HAW-EB4).